Consider the following 874-residue polypeptide: Alanine--tRNA ligase (874 aa).

The Zn(2+) site is built by H562, H566, C665, and H669.

Belongs to the class-II aminoacyl-tRNA synthetase family. It depends on Zn(2+) as a cofactor.

It is found in the cytoplasm. It carries out the reaction tRNA(Ala) + L-alanine + ATP = L-alanyl-tRNA(Ala) + AMP + diphosphate. Its function is as follows. Catalyzes the attachment of alanine to tRNA(Ala) in a two-step reaction: alanine is first activated by ATP to form Ala-AMP and then transferred to the acceptor end of tRNA(Ala). Also edits incorrectly charged Ser-tRNA(Ala) and Gly-tRNA(Ala) via its editing domain. In Pseudomonas putida (strain W619), this protein is Alanine--tRNA ligase.